Consider the following 154-residue polypeptide: Crossover junction endodeoxyribonuclease RuvC (154 aa).

Catalysis depends on residues Asp7, Glu67, and Asp139. The Mg(2+) site is built by Asp7, Glu67, and Asp139.

This sequence belongs to the RuvC family. Homodimer which binds Holliday junction (HJ) DNA. The HJ becomes 2-fold symmetrical on binding to RuvC with unstacked arms; it has a different conformation from HJ DNA in complex with RuvA. In the full resolvosome a probable DNA-RuvA(4)-RuvB(12)-RuvC(2) complex forms which resolves the HJ. Mg(2+) is required as a cofactor.

It localises to the cytoplasm. The catalysed reaction is Endonucleolytic cleavage at a junction such as a reciprocal single-stranded crossover between two homologous DNA duplexes (Holliday junction).. Its function is as follows. The RuvA-RuvB-RuvC complex processes Holliday junction (HJ) DNA during genetic recombination and DNA repair. Endonuclease that resolves HJ intermediates. Cleaves cruciform DNA by making single-stranded nicks across the HJ at symmetrical positions within the homologous arms, yielding a 5'-phosphate and a 3'-hydroxyl group; requires a central core of homology in the junction. The consensus cleavage sequence is 5'-(A/T)TT(C/G)-3'. Cleavage occurs on the 3'-side of the TT dinucleotide at the point of strand exchange. HJ branch migration catalyzed by RuvA-RuvB allows RuvC to scan DNA until it finds its consensus sequence, where it cleaves and resolves the cruciform DNA. The chain is Crossover junction endodeoxyribonuclease RuvC from Prochlorococcus marinus (strain MIT 9303).